The primary structure comprises 267 residues: NAD(P)H-hydrate epimerase (267 aa).

A YjeF N-terminal domain is found at 27 to 242 (AQKIDEDLMS…DLEAKFDLQL (216 aa)). 78–82 (NQGGD) serves as a coordination point for (6S)-NADPHX. Residues Q79 and D142 each coordinate K(+). (6S)-NADPHX contacts are provided by residues 146-152 (GFNFKGD) and D185. Residue S188 coordinates K(+).

The protein belongs to the NnrE/AIBP family. K(+) serves as cofactor.

Its subcellular location is the cytoplasm. The protein resides in the mitochondrion. The catalysed reaction is (6R)-NADHX = (6S)-NADHX. It catalyses the reaction (6R)-NADPHX = (6S)-NADPHX. Its function is as follows. Catalyzes the epimerization of the S- and R-forms of NAD(P)HX, a damaged form of NAD(P)H that is a result of enzymatic or heat-dependent hydration. This is a prerequisite for the S-specific NAD(P)H-hydrate dehydratase to allow the repair of both epimers of NAD(P)HX. This chain is NAD(P)H-hydrate epimerase, found in Mycosarcoma maydis (Corn smut fungus).